A 1209-amino-acid polypeptide reads, in one-letter code: Major DNA-binding protein (1209 aa).

Positions 290 to 312 (NAGKGSGRAQRQGDGSGSKNSAS) are disordered. A zinc finger spans residues 503-516 (CGLCNQATRPACAH). The short motif at 849–850 (FW) is the Required for filament formation element. The tract at residues 1182–1209 (QKRSLPDDILFDMGAPPEKKSGLTFDML) is required for nuclear localization.

It belongs to the herpesviridae major DNA-binding protein family. Homooligomers. Forms double-helical filaments necessary for the formation of replication compartments within the host nucleus. Interacts with the origin-binding protein. Interacts with the helicase primase complex; this interaction stimulates primer synthesis activity of the helicase-primase complex. Interacts with the DNA polymerase. Interacts with the alkaline exonuclease; this interaction increases its nuclease processivity.

It localises to the host nucleus. Its function is as follows. Plays several crucial roles in viral infection. Participates in the opening of the viral DNA origin to initiate replication by interacting with the origin-binding protein. May disrupt loops, hairpins and other secondary structures present on ssDNA to reduce and eliminate pausing of viral DNA polymerase at specific sites during elongation. Promotes viral DNA recombination by performing strand-transfer, characterized by the ability to transfer a DNA strand from a linear duplex to a complementary single-stranded DNA circle. Can also catalyze the renaturation of complementary single strands. Additionally, reorganizes the host cell nucleus, leading to the formation of prereplicative sites and replication compartments. This process is driven by the protein which can form double-helical filaments in the absence of DNA. The chain is Major DNA-binding protein from Equine herpesvirus 1 (strain V592) (EHV-1).